A 187-amino-acid polypeptide reads, in one-letter code: Lysozyme C-like protein DDB_G0288143 (187 aa).

The signal sequence occupies residues 1-23 (MKVSNLISTITIASALCLSLTNA). Disulfide bonds link Cys-50–Cys-125, Cys-74–Cys-82, and Cys-78–Cys-97. Glu-55 is a catalytic residue. Residues 133-187 (QHGSHSSTSRDSSSSSSRDSTGTGYSSSGSGTSGSGSNSGQTGHFIPGQSGHGLN) are disordered. Low complexity predominate over residues 136–175 (SHSSTSRDSSSSSSRDSTGTGYSSSGSGTSGSGSNSGQTG).

It belongs to the glycosyl hydrolase 22 family.

This is Lysozyme C-like protein DDB_G0288143 from Dictyostelium discoideum (Social amoeba).